Here is a 313-residue protein sequence, read N- to C-terminus: Solute carrier family 35 member E3 (313 aa).

10 helical membrane-spanning segments follow: residues 14 to 34, 40 to 60, 77 to 97, 100 to 122, 130 to 146, 153 to 173, 187 to 207, 215 to 235, 252 to 272, and 275 to 295; these read IIAG…INKW, GFPN…GLFI, ILLL…SLQS, IGTY…TMYY, IKLT…LNSY, LMGM…QVWV, LLYY…PFFE, IFGP…VIAF, TYNM…YVLF, and PLSL…LAYT.

It belongs to the TPT transporter family. SLC35E subfamily.

Its subcellular location is the membrane. Putative transporter. In Danio rerio (Zebrafish), this protein is Solute carrier family 35 member E3 (slc35e3).